The following is a 230-amino-acid chain: Phosducin-like protein 1 (230 aa).

An N-acetylmethionine modification is found at Met1. Positions 16–166 (AEKDKHTTVD…VVGYKNGLEK (151 aa)) constitute a Phosducin domain. Residues 25–79 (DSDDKSSGEENLDELLNELDRELDEDHEFLSAYRSERLQQISDHLKQVKKNVEDD) are a coiled coil. The segment at 81–230 (YGRLQCIDNE…RSESDSDLDI (150 aa)) is thioredoxin fold.

It belongs to the phosducin family. Interacts with the G protein beta-gamma subunit complex (STE4-STE18 complex).

It localises to the cytoplasm. Functionally, not essential for growth. Inhibits early G-protein signaling events following pheromone stimulation. May help create heterodimerizable beta-tubulin by facilitating the efficient transfer of nascent beta-tubulin polypeptides to the folding apparatus. The chain is Phosducin-like protein 1 (PLP1) from Saccharomyces cerevisiae (strain ATCC 204508 / S288c) (Baker's yeast).